Here is an 80-residue protein sequence, read N- to C-terminus: Acyl carrier protein (80 aa).

The 76-residue stretch at 4-79 (ANVEQKVKNI…DAVNYITTHK (76 aa)) folds into the Carrier domain. The residue at position 39 (serine 39) is an O-(pantetheine 4'-phosphoryl)serine.

It belongs to the acyl carrier protein (ACP) family. Post-translationally, 4'-phosphopantetheine is transferred from CoA to a specific serine of apo-ACP by AcpS. This modification is essential for activity because fatty acids are bound in thioester linkage to the sulfhydryl of the prosthetic group.

The protein localises to the cytoplasm. Its pathway is lipid metabolism; fatty acid biosynthesis. Carrier of the growing fatty acid chain in fatty acid biosynthesis. This chain is Acyl carrier protein, found in Anaeromyxobacter sp. (strain Fw109-5).